Consider the following 521-residue polypeptide: Melanopsin (521 aa).

Over 1-71 (MDSPSGPRVL…VDVPDHAHYT (71 aa)) the chain is Extracellular. N-linked (GlcNAc...) asparagine glycosylation is found at Asn-30 and Asn-34. Residues 72–92 (LGTVILLVGLTGMLGNLTVIY) traverse the membrane as a helical segment. The Cytoplasmic segment spans residues 93-106 (TFCRNRGLRTPANM). The chain crosses the membrane as a helical span at residues 107–127 (FIINLAVSDFLMSVTQAPVFF). The Extracellular portion of the chain corresponds to 128–143 (ASSLYKKWLFGETGCE). Residues Cys-142 and Cys-220 are joined by a disulfide bond. A helical membrane pass occupies residues 144–164 (FYAFCGAVFGITSMITLTAIA). Over 165-187 (MDRYLVITRPLATIGRGSKRRTA) the chain is Cytoplasmic. The chain crosses the membrane as a helical span at residues 188–208 (LVLLGVWLYALAWSLPPFFGW). Topologically, residues 209–237 (SAYVPEGLLTSCSWDYMTFTPQVRAYTML) are extracellular. A helical transmembrane segment spans residues 238 to 258 (LFCFVFFLPLLIIIFCYIFIF). Residues 259 to 293 (RAIRETGRACEGCGESPLRQRRQWQRLQSEWKMAK) are Cytoplasmic-facing. Residues 294–314 (VALIVILLFVLSWAPYSTVAL) traverse the membrane as a helical segment. The Extracellular segment spans residues 315–329 (VAFAGYSHILTPYMS). Residues 330 to 350 (SVPAVIAKASAIHNPIIYAIT) traverse the membrane as a helical segment. At Lys-337 the chain carries N6-(retinylidene)lysine. Over 351-521 (HPKYRVAIAQ…LEDDVTLRHL (171 aa)) the chain is Cytoplasmic. The tract at residues 445–486 (GELKASSSPQVQRSKTPKVPGPSTCRPMKGQGARPSSLRGDQ) is disordered. Positions 449-458 (ASSSPQVQRS) are enriched in polar residues.

It belongs to the G-protein coupled receptor 1 family. Opsin subfamily. Expressed in the retinal pigment epithelium and ganglion cell layer (at protein level). Also expressed in amacrine cell layers of the retina. Weakly expressed in vibrissae, and tail. As to expression, observed with processes in the outer strata of inner plexiform layer (IPL) close to the inner nuclear layer (INL) or is found to be bistratified with processes located both in the inner (ON) or outer (OFF) layers of the IPL (at protein level). A second population of isoform 1 is identified in processes which are confined to the inner layer of the IPL near to the ganglion cell layer (GCL) (at protein level). In terms of tissue distribution, about 40 times more abundant than isoform 1 in the retina (at protein level). Isoform 2 is involved in processes localized to the outer IPL or is bistratified with processes in both the inner and outer layers of the IPL (at protein level). Isoform 2 is absent in the processes confined only to the inner layer of the IPL (at protein level).

Its subcellular location is the cell membrane. The protein resides in the cell projection. The protein localises to the axon. It is found in the dendrite. It localises to the perikaryon. Photoreceptor that binds cis-retinaldehydes. Contributes to pupillar reflex, photoentrainment and other non-image forming responses to light. May be involved in the optokinetic visual tracking response. May be involved in the regulation of retinal hyaloid vessel growth and regression. This Mus musculus (Mouse) protein is Melanopsin (Opn4).